Reading from the N-terminus, the 389-residue chain is MGQNLSTSNPLGFFPEHQLDPAFKANTNNPDWDFNPNKDNWPKANEVGVGAFGPGLTPPHGGLLGWSPQAQGIITTVPANPPPASTNRQSGRKPTPISPPLRDTHPQAMHWNSTTFHQALQDPRVRGLYFPAGGSSSGTAYPVPDTASHISSIFSRTGDPAPNMESITSGFLGPLLVLQAGFFLLTKILTIPQSLDSWWTSLNFLGGAPVCLGQNSQSPTSNHSPTSCPPICPGYRWMCLRRFIIFLFILLLCLIFLLVLLDYQGMLPVCPLIPGSTTTSTGPCKTCTTTAQGTSLYPSCCCTKPSDGNCTCIPIPSSWAFAKFLWEWASVRFSWLSLLAPFVQWFAGLSPTVWLSVIWMMWYWGPNLYNILSPFIPLLPIFFCLWVYI.

Met-1 carries the post-translational modification N-acetylmethionine. Gly-2 carries the N-myristoyl glycine; by host lipid modification. Residues 2–108 form a pre-S1 region; it reads GQNLSTSNPL…PPLRDTHPQA (107 aa). A pre-S region spans residues 2–163; the sequence is GQNLSTSNPL…FSRTGDPAPN (162 aa). The Virion surface; in external conformation portion of the chain corresponds to 2–170; that stretch reads GQNLSTSNPL…APNMESITSG (169 aa). Residues 2-242 are Intravirion; in internal conformation-facing; it reads GQNLSTSNPL…PGYRWMCLRR (241 aa). Residues 73–99 form a disordered region; sequence IITTVPANPPPASTNRQSGRKPTPISP. Residues 109-163 form a pre-S2 region; the sequence is MHWNSTTFHQALQDPRVRGLYFPAGGSSSGTAYPVPDTASHISSIFSRTGDPAPN. The helical transmembrane segment at 171–191 threads the bilayer; the sequence is FLGPLLVLQAGFFLLTKILTI. Over 192-242 the chain is Intravirion; in external conformation; sequence PQSLDSWWTSLNFLGGAPVCLGQNSQSPTSNHSPTSCPPICPGYRWMCLRR. Residues 243 to 263 form a helical membrane-spanning segment; that stretch reads FIIFLFILLLCLIFLLVLLDY. Over 264–337 the chain is Virion surface; that stretch reads QGMLPVCPLI…WASVRFSWLS (74 aa). The N-linked (GlcNAc...) asparagine; by host glycan is linked to Asn-309. Residues 338 to 358 traverse the membrane as a helical segment; sequence LLAPFVQWFAGLSPTVWLSVI. Residues 359–364 are Intravirion-facing; it reads WMMWYW. Residues 365–387 form a helical membrane-spanning segment; it reads GPNLYNILSPFIPLLPIFFCLWV. The Virion surface portion of the chain corresponds to 388–389; the sequence is YI.

It belongs to the orthohepadnavirus major surface antigen family. In terms of assembly, in its internal form (Li-HBsAg), interacts with the capsid protein and with the isoform S. Interacts with host chaperone CANX. As to quaternary structure, associates with host chaperone CANX through its pre-S2 N glycan; this association may be essential for isoform M proper secretion. Interacts with isoform L. Interacts with the antigens of satellite virus HDV (HDVAgs); this interaction is required for encapsidation of HDV genomic RNA. Isoform M is N-terminally acetylated by host at a ratio of 90%, and N-glycosylated by host at the pre-S2 region. Post-translationally, myristoylated.

The protein resides in the virion membrane. In terms of biological role, the large envelope protein exists in two topological conformations, one which is termed 'external' or Le-HBsAg and the other 'internal' or Li-HBsAg. In its external conformation the protein attaches the virus to cell receptors and thereby initiating infection. This interaction determines the species specificity and liver tropism. This attachment induces virion internalization predominantly through caveolin-mediated endocytosis. The large envelope protein also assures fusion between virion membrane and endosomal membrane. In its internal conformation the protein plays a role in virion morphogenesis and mediates the contact with the nucleocapsid like a matrix protein. Functionally, the middle envelope protein plays an important role in the budding of the virion. It is involved in the induction of budding in a nucleocapsid independent way. In this process the majority of envelope proteins bud to form subviral lipoprotein particles of 22 nm of diameter that do not contain a nucleocapsid. The sequence is that of Large envelope protein from Gorilla gorilla (western gorilla).